The primary structure comprises 487 residues: UDP-N-acetylmuramate--L-alanine ligase (487 aa).

129–135 (GTHGKTT) is an ATP binding site.

Belongs to the MurCDEF family.

It is found in the cytoplasm. The enzyme catalyses UDP-N-acetyl-alpha-D-muramate + L-alanine + ATP = UDP-N-acetyl-alpha-D-muramoyl-L-alanine + ADP + phosphate + H(+). Its pathway is cell wall biogenesis; peptidoglycan biosynthesis. Its function is as follows. Cell wall formation. This chain is UDP-N-acetylmuramate--L-alanine ligase, found in Aliivibrio salmonicida (strain LFI1238) (Vibrio salmonicida (strain LFI1238)).